The chain runs to 1461 residues: Gag-Pro-Pol polyprotein (1461 aa).

Glycine 2 is lipidated: N-myristoyl glycine; by host. The short motif at 94–97 is the PTAP/PSAP motif element; it reads PSAP. The disordered stretch occupies residues 94 to 121; it reads PSAPAAPVPTPICPTTTPPPPPPPSPEA. A compositionally biased stretch (pro residues) spans 97-121; that stretch reads PAAPVPTPICPTTTPPPPPPPSPEA. The PPXY motif motif lies at 124–127; that stretch reads PPPY. The short motif at 130-133 is the PTAP/PSAP motif element; it reads PTTT. 2 CCHC-type zinc fingers span residues 361 to 378 and 384 to 401; these read QPCF…DCTQ and GPCP…DCPQ. A disordered region spans residues 399 to 425; that stretch reads CPQLKPPQEEGEPLLLDLPSTSGTTEE. Residues 473–551 enclose the Peptidase A2 domain; the sequence is TQALLDTGAD…NKWTIIGRDA (79 aa). Residue aspartate 478 is the For protease activity; shared with dimeric partner of the active site. The region spanning 612–802 is the Reverse transcriptase domain; sequence LEAGHIEPYS…GQIRFLGQVI (191 aa). Aspartate 678, aspartate 753, aspartate 754, aspartate 1038, glutamate 1073, aspartate 1095, aspartate 1156, aspartate 1229, and aspartate 1286 together coordinate Mg(2+). One can recognise an RNase H type-1 domain in the interval 1029 to 1164; sequence LDTAPCLFSD…TDSLILAPLV (136 aa). The region spanning 1218 to 1387 is the Integrase catalytic domain; the sequence is RGLLPNHIWQ…PPIPEASTPP (170 aa). The segment at residues 1392–1441 is a DNA-binding region (integrase-type); that stretch reads KWFYYKLPGLTNQRWKGPLQSLQEAAGAALLSIDGSPRWIPWRFLKKAAC.

Homodimer; the homodimers are part of the immature particles. Interacts with human TSG101 and NEDD4; these interactions are essential for budding and release of viral particles. As to quaternary structure, homodimer; further assembles as homohexamers. Mg(2+) serves as cofactor. Phosphorylation of the matrix protein p19 by MAPK1 seems to play a role in budding. In terms of processing, myristoylated. Myristoylation of the matrix (MA) domain mediates the transport and binding of Gag polyproteins to the host plasma membrane and is required for the assembly of viral particles. Post-translationally, specific enzymatic cleavages by the viral protease yield mature proteins. The polyprotein is cleaved during and after budding, this process is termed maturation. The protease is autoproteolytically processed at its N- and C-termini.

Its subcellular location is the virion. The enzyme catalyses Endonucleolytic cleavage to 5'-phosphomonoester.. The catalysed reaction is DNA(n) + a 2'-deoxyribonucleoside 5'-triphosphate = DNA(n+1) + diphosphate. Functionally, the matrix domain targets Gag, Gag-Pro and Gag-Pro-Pol polyproteins to the plasma membrane via a multipartite membrane binding signal, that includes its myristoylated N-terminus. Matrix protein. Its function is as follows. Forms the spherical core of the virus that encapsulates the genomic RNA-nucleocapsid complex. In terms of biological role, binds strongly to viral nucleic acids and promote their aggregation. Also destabilizes the nucleic acids duplexes via highly structured zinc-binding motifs. Functionally, the aspartyl protease mediates proteolytic cleavages of Gag and Gag-Pol polyproteins during or shortly after the release of the virion from the plasma membrane. Cleavages take place as an ordered, step-wise cascade to yield mature proteins. This process is called maturation. Displays maximal activity during the budding process just prior to particle release from the cell (Potential). Cleaves the translation initiation factor eIF4G leading to the inhibition of host cap-dependent translation. RT is a multifunctional enzyme that converts the viral RNA genome into dsDNA in the cytoplasm, shortly after virus entry into the cell. This enzyme displays a DNA polymerase activity that can copy either DNA or RNA templates, and a ribonuclease H (RNase H) activity that cleaves the RNA strand of RNA-DNA heteroduplexes in a partially processive 3' to 5'-endonucleasic mode. Conversion of viral genomic RNA into dsDNA requires many steps. A tRNA-Pro binds to the primer-binding site (PBS) situated at the 5'-end of the viral RNA. RT uses the 3' end of the tRNA primer to perform a short round of RNA-dependent minus-strand DNA synthesis. The reading proceeds through the U5 region and ends after the repeated (R) region which is present at both ends of viral RNA. The portion of the RNA-DNA heteroduplex is digested by the RNase H, resulting in a ssDNA product attached to the tRNA primer. This ssDNA/tRNA hybridizes with the identical R region situated at the 3' end of viral RNA. This template exchange, known as minus-strand DNA strong stop transfer, can be either intra- or intermolecular. RT uses the 3' end of this newly synthesized short ssDNA to perform the RNA-dependent minus-strand DNA synthesis of the whole template. RNase H digests the RNA template except for a polypurine tract (PPT) situated at the 5' end of the genome. It is not clear if both polymerase and RNase H activities are simultaneous. RNase H probably can proceed both in a polymerase-dependent (RNA cut into small fragments by the same RT performing DNA synthesis) and a polymerase-independent mode (cleavage of remaining RNA fragments by free RTs). Secondly, RT performs DNA-directed plus-strand DNA synthesis using the PPT that has not been removed by RNase H as primer. PPT and tRNA primers are then removed by RNase H. The 3' and 5' ssDNA PBS regions hybridize to form a circular dsDNA intermediate. Strand displacement synthesis by RT to the PBS and PPT ends produces a blunt ended, linear dsDNA copy of the viral genome that includes long terminal repeats (LTRs) at both ends. Its function is as follows. Catalyzes viral DNA integration into the host chromosome, by performing a series of DNA cutting and joining reactions. This Human T-cell leukemia virus 2 (HTLV-2) protein is Gag-Pro-Pol polyprotein (gag-pro-pol).